The sequence spans 393 residues: 5-amino-6-(D-ribitylamino)uracil--L-tyrosine 4-hydroxyphenyl transferase (393 aa).

In terms of domain architecture, Radical SAM core spans 71-318; it reads VTYVINRNIN…TAVSRIFLGN (248 aa). Residues C85, C89, and C92 each coordinate [4Fe-4S] cluster.

The protein belongs to the radical SAM superfamily. CofH family. Consists of two subunits, CofG and CofH. The cofactor is [4Fe-4S] cluster.

It carries out the reaction 5-amino-6-(D-ribitylamino)uracil + L-tyrosine + S-adenosyl-L-methionine = 5-amino-5-(4-hydroxybenzyl)-6-(D-ribitylimino)-5,6-dihydrouracil + 2-iminoacetate + 5'-deoxyadenosine + L-methionine + H(+). Its pathway is cofactor biosynthesis; coenzyme F0 biosynthesis. Functionally, catalyzes the radical-mediated synthesis of 5-amino-5-(4-hydroxybenzyl)-6-(D-ribitylimino)-5,6-dihydrouracil from 5-amino-6-(D-ribitylamino)uracil and L-tyrosine. The sequence is that of 5-amino-6-(D-ribitylamino)uracil--L-tyrosine 4-hydroxyphenyl transferase from Trichodesmium erythraeum (strain IMS101).